A 231-amino-acid chain; its full sequence is Large ribosomal subunit protein uL1 (231 aa).

This sequence belongs to the universal ribosomal protein uL1 family. In terms of assembly, part of the 50S ribosomal subunit.

Binds directly to 23S rRNA. The L1 stalk is quite mobile in the ribosome, and is involved in E site tRNA release. Its function is as follows. Protein L1 is also a translational repressor protein, it controls the translation of the L11 operon by binding to its mRNA. This Methylococcus capsulatus (strain ATCC 33009 / NCIMB 11132 / Bath) protein is Large ribosomal subunit protein uL1.